The following is a 939-amino-acid chain: Protein translocase subunit SecA (939 aa).

ATP contacts are provided by residues glutamine 85, 103–107 (GEGKT), and aspartate 504. The interval 850-939 (PVQDGAERPS…KGGGGRRRKK (90 aa)) is disordered. The segment covering 854–864 (GAERPSLEKEG) has biased composition (basic and acidic residues). Positions 924–939 (ERRKAQKGGGGRRRKK) are enriched in basic residues.

This sequence belongs to the SecA family. As to quaternary structure, monomer and homodimer. Part of the essential Sec protein translocation apparatus which comprises SecA, SecYEG and auxiliary proteins SecDF. Other proteins may also be involved.

It localises to the cell membrane. The protein resides in the cytoplasm. It carries out the reaction ATP + H2O + cellular proteinSide 1 = ADP + phosphate + cellular proteinSide 2.. Part of the Sec protein translocase complex. Interacts with the SecYEG preprotein conducting channel. Has a central role in coupling the hydrolysis of ATP to the transfer of proteins into and across the cell membrane, serving as an ATP-driven molecular motor driving the stepwise translocation of polypeptide chains across the membrane. The sequence is that of Protein translocase subunit SecA from Streptomyces griseus subsp. griseus (strain JCM 4626 / CBS 651.72 / NBRC 13350 / KCC S-0626 / ISP 5235).